The sequence spans 157 residues: Small ribosomal subunit protein uS7 (157 aa).

This sequence belongs to the universal ribosomal protein uS7 family. Part of the 30S ribosomal subunit. Contacts proteins S9 and S11.

In terms of biological role, one of the primary rRNA binding proteins, it binds directly to 16S rRNA where it nucleates assembly of the head domain of the 30S subunit. Is located at the subunit interface close to the decoding center, probably blocks exit of the E-site tRNA. The protein is Small ribosomal subunit protein uS7 of Phenylobacterium zucineum (strain HLK1).